A 745-amino-acid chain; its full sequence is AP-3 complex subunit beta (745 aa).

Serine 638 carries the phosphoserine modification. The tract at residues 674–745 (YASETSESSE…TEPEPNYWQS (72 aa)) is disordered. Acidic residues predominate over residues 680-718 (ESSEGEYETSTSESEDEETDDTSQEEDNEKNSTPDEDTE).

The protein belongs to the adaptor complexes large subunit family. As to quaternary structure, adaptor protein complex 3 (AP-3) is a heterotetramer composed of 2 large adaptins (apl5 and apl6), a medium adaptin (apm3) and a small adaptin (aps3).

The protein localises to the golgi apparatus. Its subcellular location is the cytoplasmic vesicle. It localises to the clathrin-coated vesicle membrane. Functionally, adaptins are components of the adaptor complexes which link clathrin to receptors in coated vesicles. Clathrin-associated protein complexes are believed to interact with the cytoplasmic tails of membrane proteins, leading to their selection and concentration. Beta adaptin is a subunit of the plasma membrane adaptor. This Schizosaccharomyces pombe (strain 972 / ATCC 24843) (Fission yeast) protein is AP-3 complex subunit beta (apl6).